The sequence spans 216 residues: ATP-dependent Clp protease proteolytic subunit (216 aa).

Serine 120 serves as the catalytic Nucleophile. The active site involves histidine 145.

Belongs to the peptidase S14 family. In terms of assembly, fourteen ClpP subunits assemble into 2 heptameric rings which stack back to back to give a disk-like structure with a central cavity, resembling the structure of eukaryotic proteasomes.

Its subcellular location is the cytoplasm. The catalysed reaction is Hydrolysis of proteins to small peptides in the presence of ATP and magnesium. alpha-casein is the usual test substrate. In the absence of ATP, only oligopeptides shorter than five residues are hydrolyzed (such as succinyl-Leu-Tyr-|-NHMec, and Leu-Tyr-Leu-|-Tyr-Trp, in which cleavage of the -Tyr-|-Leu- and -Tyr-|-Trp bonds also occurs).. Functionally, cleaves peptides in various proteins in a process that requires ATP hydrolysis. Has a chymotrypsin-like activity. Plays a major role in the degradation of misfolded proteins. The sequence is that of ATP-dependent Clp protease proteolytic subunit from Cupriavidus pinatubonensis (strain JMP 134 / LMG 1197) (Cupriavidus necator (strain JMP 134)).